The following is a 152-amino-acid chain: Ribosome maturation factor RimP (152 aa).

This sequence belongs to the RimP family.

It localises to the cytoplasm. Required for maturation of 30S ribosomal subunits. The protein is Ribosome maturation factor RimP of Francisella tularensis subsp. tularensis (strain FSC 198).